Reading from the N-terminus, the 338-residue chain is Aspartate--ammonia ligase (338 aa).

It belongs to the class-II aminoacyl-tRNA synthetase family. AsnA subfamily.

The protein resides in the cytoplasm. It carries out the reaction L-aspartate + NH4(+) + ATP = L-asparagine + AMP + diphosphate + H(+). It participates in amino-acid biosynthesis; L-asparagine biosynthesis; L-asparagine from L-aspartate (ammonia route): step 1/1. The polypeptide is Aspartate--ammonia ligase (Lactobacillus delbrueckii subsp. bulgaricus (strain ATCC 11842 / DSM 20081 / BCRC 10696 / JCM 1002 / NBRC 13953 / NCIMB 11778 / NCTC 12712 / WDCM 00102 / Lb 14)).